Consider the following 263-residue polypeptide: Aminoglycoside 3'-phosphotransferase (263 aa).

Aspartate 189 functions as the Proton acceptor in the catalytic mechanism.

This sequence belongs to the aminoglycoside phosphotransferase family.

The enzyme catalyses kanamycin A + ATP = kanamycin 3'-phosphate + ADP + H(+). Its function is as follows. Resistance to kanamycin and structurally-related aminoglycosides, including amikacin. This is Aminoglycoside 3'-phosphotransferase (aphA) from Staphylococcus aureus.